Reading from the N-terminus, the 266-residue chain is Thymidylate synthase (266 aa).

Residue arginine 24 participates in dUMP binding. Histidine 54 contacts (6R)-5,10-methylene-5,6,7,8-tetrahydrofolate. 129–130 contacts dUMP; sequence RR. Cysteine 149 (nucleophile) is an active-site residue. Residues 169-172, asparagine 180, and 210-212 contribute to the dUMP site; these read RSAD and HIY. Residue aspartate 172 coordinates (6R)-5,10-methylene-5,6,7,8-tetrahydrofolate. Alanine 265 is a (6R)-5,10-methylene-5,6,7,8-tetrahydrofolate binding site.

Belongs to the thymidylate synthase family. Bacterial-type ThyA subfamily. In terms of assembly, homodimer.

It is found in the cytoplasm. The enzyme catalyses dUMP + (6R)-5,10-methylene-5,6,7,8-tetrahydrofolate = 7,8-dihydrofolate + dTMP. It functions in the pathway pyrimidine metabolism; dTTP biosynthesis. Functionally, catalyzes the reductive methylation of 2'-deoxyuridine-5'-monophosphate (dUMP) to 2'-deoxythymidine-5'-monophosphate (dTMP) while utilizing 5,10-methylenetetrahydrofolate (mTHF) as the methyl donor and reductant in the reaction, yielding dihydrofolate (DHF) as a by-product. This enzymatic reaction provides an intracellular de novo source of dTMP, an essential precursor for DNA biosynthesis. In Corynebacterium glutamicum (strain R), this protein is Thymidylate synthase.